The primary structure comprises 290 residues: Probable proteasome subunit beta type-6 (290 aa).

This sequence belongs to the peptidase T1B family. In terms of assembly, the 26S proteasome consists of a 20S proteasome core and two 19S regulatory subunits. The 20S proteasome core is composed of 28 subunits that are arranged in four stacked rings, resulting in a barrel-shaped structure. The two end rings are each formed by seven alpha subunits, and the two central rings are each formed by seven beta subunits. The catalytic chamber with the active sites is on the inside of the barrel.

Its subcellular location is the cytoplasm. It localises to the nucleus. Its function is as follows. Non-catalytic component of the proteasome which degrades poly-ubiquitinated proteins in the cytoplasm and in the nucleus. It is essential for the regulated turnover of proteins and for the removal of misfolded proteins. The proteasome is a multicatalytic proteinase complex that is characterized by its ability to cleave peptides with Arg, Phe, Tyr, Leu, and Glu adjacent to the leaving group at neutral or slightly basic pH. It has an ATP-dependent proteolytic activity. This Encephalitozoon cuniculi (strain GB-M1) (Microsporidian parasite) protein is Probable proteasome subunit beta type-6 (PRE7).